Here is a 515-residue protein sequence, read N- to C-terminus: Probable coatomer subunit delta (515 aa).

Basic and acidic residues predominate over residues 161-180 (AKQAMAEKAKELKRAQKEAL). Residues 161 to 231 (AKQAMAEKAK…GGKALKLGGK (71 aa)) are disordered. Low complexity predominate over residues 187–198 (SYQSSTGISSSS). One can recognise an MHD domain in the interval 276 to 515 (REVVHVRTEE…TFNSENFEIV (240 aa)).

This sequence belongs to the adaptor complexes medium subunit family. Delta-COP subfamily. Oligomeric complex that consists of at least the alpha, beta, beta', gamma, delta, epsilon and zeta subunits.

It is found in the cytoplasm. Its subcellular location is the golgi apparatus membrane. The protein localises to the cytoplasmic vesicle. The protein resides in the COPI-coated vesicle membrane. Its function is as follows. The coatomer is a cytosolic protein complex that binds to dilysine motifs and reversibly associates with Golgi non-clathrin-coated vesicles, which further mediate biosynthetic protein transport from the ER, via the Golgi up to the trans Golgi network. Coatomer complex is required for budding from Golgi membranes, and is essential for the retrograde Golgi-to-ER transport of dilysine-tagged proteins. The polypeptide is Probable coatomer subunit delta (Caenorhabditis elegans).